Consider the following 426-residue polypeptide: Histidine--tRNA ligase 1 (426 aa).

It belongs to the class-II aminoacyl-tRNA synthetase family. Homodimer.

Its subcellular location is the cytoplasm. It catalyses the reaction tRNA(His) + L-histidine + ATP = L-histidyl-tRNA(His) + AMP + diphosphate + H(+). In Shouchella clausii (strain KSM-K16) (Alkalihalobacillus clausii), this protein is Histidine--tRNA ligase 1.